The following is a 400-amino-acid chain: tRNA(Met) cytidine acetate ligase (400 aa).

Residues 7-20 (IVEYNPFHNGHLYH), Gly-101, Asn-159, and 184-185 (RI) contribute to the ATP site.

This sequence belongs to the TmcAL family.

The protein localises to the cytoplasm. It carries out the reaction cytidine(34) in elongator tRNA(Met) + acetate + ATP = N(4)-acetylcytidine(34) in elongator tRNA(Met) + AMP + diphosphate. Functionally, catalyzes the formation of N(4)-acetylcytidine (ac(4)C) at the wobble position of elongator tRNA(Met), using acetate and ATP as substrates. First activates an acetate ion to form acetyladenylate (Ac-AMP) and then transfers the acetyl group to tRNA to form ac(4)C34. The protein is tRNA(Met) cytidine acetate ligase of Caldicellulosiruptor bescii (strain ATCC BAA-1888 / DSM 6725 / KCTC 15123 / Z-1320) (Anaerocellum thermophilum).